The following is a 240-amino-acid chain: Uridylate kinase (240 aa).

Residue 13 to 16 (KLSG) participates in ATP binding. The tract at residues 21-26 (GDKGFG) is involved in allosteric activation by GTP. G55 is a UMP binding site. ATP-binding residues include G56 and R60. UMP contacts are provided by residues D75 and 136 to 143 (IGNPYFST). ATP-binding residues include N164, Y170, and D173.

It belongs to the UMP kinase family. As to quaternary structure, homohexamer.

The protein resides in the cytoplasm. It carries out the reaction UMP + ATP = UDP + ADP. The protein operates within pyrimidine metabolism; CTP biosynthesis via de novo pathway; UDP from UMP (UMPK route): step 1/1. With respect to regulation, allosterically activated by GTP. Inhibited by UTP. Its function is as follows. Catalyzes the reversible phosphorylation of UMP to UDP. The polypeptide is Uridylate kinase (Staphylococcus epidermidis (strain ATCC 35984 / DSM 28319 / BCRC 17069 / CCUG 31568 / BM 3577 / RP62A)).